The following is a 366-amino-acid chain: Dehydrogenase aclE (366 aa).

The signal sequence occupies residues M1–C19. A glycan (N-linked (GlcNAc...) asparagine) is linked at N330.

The protein belongs to the Gfo/Idh/MocA family.

It participates in mycotoxin biosynthesis. Functionally, dehydrogenase; part of the gene cluster that mediates the biosynthesis of aspirochlorine (or antibiotic A30641), an unusual halogenated spiro compound with distinctive antifungal properties due to selective inhibition of protein biosynthesis, and which is also active against bacteria, viruses, and murine tumor cells. The non-ribosomal peptide synthetase (NRPS) aclP is responsible the formation of the diketopiperazine (DKP) core from the condensation of 2 phenylalanine residues. One Phe residue is tailored into chlorotyrosine by hydroxylation and chlorination, whereas the second Phe undergoes an unprecedented C-C bond cleavage to be converted into glycine. After formation of the DKP, sulfur is incorporated into the DKP by conjugation with glutathione by aclG, followed by its stepwise degradation to the thiol by aclI, aclJ and aclK, and the dithiol oxidation by aclT. In addition, oxygenases (aclB, aclC, aclL and aclO) and O-methyltransferases (aclM and aclU) act as tailoring enzymes to produce the intermediate dechloroaspirochlorine. Ultimately, chlorination of dechloroaspirochlorine by the halogenase aclH is the last step in the aspirochlorine pathway. In Aspergillus oryzae (strain ATCC 42149 / RIB 40) (Yellow koji mold), this protein is Dehydrogenase aclE.